Consider the following 259-residue polypeptide: Cobalt-precorrin-4 C(11)-methyltransferase (259 aa).

It belongs to the precorrin methyltransferase family.

It carries out the reaction Co-precorrin-4 + S-adenosyl-L-methionine = Co-precorrin-5A + S-adenosyl-L-homocysteine + H(+). It participates in cofactor biosynthesis; adenosylcobalamin biosynthesis; cob(II)yrinate a,c-diamide from sirohydrochlorin (anaerobic route): step 4/10. In terms of biological role, catalyzes the methylation of C-11 in cobalt-precorrin-4 to form cobalt-precorrin-5A. The sequence is that of Cobalt-precorrin-4 C(11)-methyltransferase (cbiF) from Methanocaldococcus jannaschii (strain ATCC 43067 / DSM 2661 / JAL-1 / JCM 10045 / NBRC 100440) (Methanococcus jannaschii).